Consider the following 282-residue polypeptide: MALVLDGRALAKKIEADLLVRVEALKAKSGRTPILATILVGDDGASATYVRMKGNACRRVGMDSLKIELSQETTTEQLLAEIEKLNANPDVHGILLQHPVPAQIDERACFDAISLAKDVDGVTCLGYGRMAMGEAAYGSATPAGIMTILKENNIEIAGKHAVVVGRSAILGKPMAAMLLEANATVTICHSRTQNLAEFVKQADIIVGAVGKAELIQKDWIKPGAVVVDAGFHPRDGGGVGDIQLQGIEDVASAYTPVPGGVGPMTITTLIRQTVEAAEKALA.

Residues 165 to 167 (GRS) and Ser190 each bind NADP(+).

It belongs to the tetrahydrofolate dehydrogenase/cyclohydrolase family. Homodimer.

It carries out the reaction (6R)-5,10-methylene-5,6,7,8-tetrahydrofolate + NADP(+) = (6R)-5,10-methenyltetrahydrofolate + NADPH. It catalyses the reaction (6R)-5,10-methenyltetrahydrofolate + H2O = (6R)-10-formyltetrahydrofolate + H(+). Its pathway is one-carbon metabolism; tetrahydrofolate interconversion. Catalyzes the oxidation of 5,10-methylenetetrahydrofolate to 5,10-methenyltetrahydrofolate and then the hydrolysis of 5,10-methenyltetrahydrofolate to 10-formyltetrahydrofolate. This Acinetobacter baylyi (strain ATCC 33305 / BD413 / ADP1) protein is Bifunctional protein FolD 2.